Reading from the N-terminus, the 172-residue chain is Diphosphoinositol polyphosphate phosphohydrolase 1 (172 aa).

M1 is modified (N-acetylmethionine). Residues R10, K18–R20, and S39–R41 each bind substrate. Positions Y17 to R144 constitute a Nudix hydrolase domain. The Mg(2+) site is built by G50 and E66. Positions G51–G72 match the Nudix box motif. Catalysis depends on E69, which acts as the Proton acceptor. E70 contacts Mg(2+). Substrate-binding positions include R89–H91, R115, and K133.

The protein belongs to the Nudix hydrolase family. DIPP subfamily. Monomer. The cofactor is Mg(2+). Requires Mn(2+) as cofactor. Zn(2+) serves as cofactor.

It is found in the cytoplasm. Its subcellular location is the nucleus. It catalyses the reaction diphospho-myo-inositol polyphosphate + H2O = myo-inositol polyphosphate + phosphate.. The enzyme catalyses 5-diphospho-1D-myo-inositol 1,2,3,4,6-pentakisphosphate + H2O = 1D-myo-inositol hexakisphosphate + phosphate + H(+). The catalysed reaction is 3,5-bis(diphospho)-1D-myo-inositol 1,2,4,6-tetrakisphosphate + H2O = 3-diphospho-1D-myo-inositol 1,2,4,5,6-pentakisphosphate + phosphate + 2 H(+). It carries out the reaction [phosphate](n+1) + n H2O = (n+1) phosphate + n H(+). It catalyses the reaction P(1),P(5)-bis(5'-adenosyl) pentaphosphate + H2O = ADP + ATP + 2 H(+). The enzyme catalyses P(1),P(6)-bis(5'-adenosyl) hexaphosphate + H2O = 2 ATP + 2 H(+). The catalysed reaction is P(1),P(4)-bis(5'-adenosyl) tetraphosphate + H2O = AMP + ATP + 2 H(+). It carries out the reaction a 5'-end (N(7)-methyl 5'-triphosphoguanosine)-ribonucleoside in mRNA + H2O = N(7)-methyl-GMP + a 5'-end diphospho-ribonucleoside in mRNA + 2 H(+). It catalyses the reaction a 5'-end (N(7)-methyl 5'-triphosphoguanosine)-ribonucleoside in mRNA + H2O = N(7)-methyl-GDP + a 5'-end phospho-ribonucleoside in mRNA + 2 H(+). Functionally, cleaves a beta-phosphate from the diphosphate groups in PP-InsP5 (diphosphoinositol pentakisphosphate) and [PP]2-InsP4 (bisdiphosphoinositol tetrakisphosphate), suggesting that it may play a role in signal transduction. InsP6 (inositol hexakisphosphate) is not a substrate. Also able to catalyze the hydrolysis of dinucleoside oligophosphates, with diadenosine 5',5'''-P1,P6-hexaphosphate (Ap6A) and diadenosine 5',5'''- P1,P5-pentaphosphate (Ap5A) being the preferred substrates. The major reaction products are ADP and p4a from Ap6A and ADP and ATP from Ap5A. Also able to hydrolyze 5- phosphoribose 1-diphosphate. Acts as a decapping enzyme that can hydrolyze both monomethylated and unmethylated capped RNAs. Hydrolyzes monomethylated capped RNA after both the alpha- and beta-phosphates generating m7GMP + ppRNA and m7GDP + pRNA. Modulates the stability of a subset of mRNAs implicated in cell motility. Divalent cations zinc, magnesium and manganese determine its substrate specificity. Exhibits diphosphoinositol polyphosphate phosphohydrolase in the presence of magnesium ions, diadenosine hexaphosphate hydrolase activity in the presence of manganese ions and endopolyphosphatase activity in the presence of zinc ions. Plays an important role in limiting DNA damage and maintaining cell survival upon oxidative stress via its endopolyphosphatase activity. This Bos taurus (Bovine) protein is Diphosphoinositol polyphosphate phosphohydrolase 1.